Consider the following 128-residue polypeptide: Aspartate 1-decarboxylase (128 aa).

The Schiff-base intermediate with substrate; via pyruvic acid role is filled by serine 25. A Pyruvic acid (Ser) modification is found at serine 25. Residue threonine 57 participates in substrate binding. Residue tyrosine 58 is the Proton donor of the active site. Residue 73–75 (GAA) coordinates substrate.

Belongs to the PanD family. As to quaternary structure, heterooctamer of four alpha and four beta subunits. Requires pyruvate as cofactor. In terms of processing, is synthesized initially as an inactive proenzyme, which is activated by self-cleavage at a specific serine bond to produce a beta-subunit with a hydroxyl group at its C-terminus and an alpha-subunit with a pyruvoyl group at its N-terminus.

It localises to the cytoplasm. The enzyme catalyses L-aspartate + H(+) = beta-alanine + CO2. It participates in cofactor biosynthesis; (R)-pantothenate biosynthesis; beta-alanine from L-aspartate: step 1/1. Functionally, catalyzes the pyruvoyl-dependent decarboxylation of aspartate to produce beta-alanine. The chain is Aspartate 1-decarboxylase from Chlorobium luteolum (strain DSM 273 / BCRC 81028 / 2530) (Pelodictyon luteolum).